An 81-amino-acid polypeptide reads, in one-letter code: Photosystem I iron-sulfur center (81 aa).

2 4Fe-4S ferredoxin-type domains span residues 2–31 (SHAVKIYDTCIGCTQCVRACPLDVLEMVPW) and 39–68 (IASSPRTEDCVGCKRCETACPTDFLSIRVY). Residues Cys11, Cys14, Cys17, Cys21, Cys48, Cys51, Cys54, and Cys58 each coordinate [4Fe-4S] cluster.

The cyanobacterial PSI reaction center is composed of one copy each of PsaA,B,C,D,E,F,I,J,K,L,M and X, and forms trimeric complexes. The cofactor is [4Fe-4S] cluster.

The protein resides in the cellular thylakoid membrane. The catalysed reaction is reduced [plastocyanin] + hnu + oxidized [2Fe-2S]-[ferredoxin] = oxidized [plastocyanin] + reduced [2Fe-2S]-[ferredoxin]. Functionally, apoprotein for the two 4Fe-4S centers FA and FB of photosystem I (PSI); essential for photochemical activity. FB is the terminal electron acceptor of PSI, donating electrons to ferredoxin. The C-terminus interacts with PsaA/B/D and helps assemble the protein into the PSI complex. Required for binding of PsaD and PsaE to PSI. PSI is a plastocyanin/cytochrome c6-ferredoxin oxidoreductase, converting photonic excitation into a charge separation, which transfers an electron from the donor P700 chlorophyll pair to the spectroscopically characterized acceptors A0, A1, FX, FA and FB in turn. This is Photosystem I iron-sulfur center from Prochlorococcus marinus (strain NATL2A).